Reading from the N-terminus, the 195-residue chain is Imidazoleglycerol-phosphate dehydratase (195 aa).

It belongs to the imidazoleglycerol-phosphate dehydratase family.

It localises to the cytoplasm. The catalysed reaction is D-erythro-1-(imidazol-4-yl)glycerol 3-phosphate = 3-(imidazol-4-yl)-2-oxopropyl phosphate + H2O. It functions in the pathway amino-acid biosynthesis; L-histidine biosynthesis; L-histidine from 5-phospho-alpha-D-ribose 1-diphosphate: step 6/9. This Hydrogenovibrio crunogenus (strain DSM 25203 / XCL-2) (Thiomicrospira crunogena) protein is Imidazoleglycerol-phosphate dehydratase.